The primary structure comprises 214 residues: Peptide methionine sulfoxide reductase MsrA 2 (214 aa).

Cys45 is a catalytic residue.

This sequence belongs to the MsrA Met sulfoxide reductase family.

The catalysed reaction is L-methionyl-[protein] + [thioredoxin]-disulfide + H2O = L-methionyl-(S)-S-oxide-[protein] + [thioredoxin]-dithiol. The enzyme catalyses [thioredoxin]-disulfide + L-methionine + H2O = L-methionine (S)-S-oxide + [thioredoxin]-dithiol. Functionally, has an important function as a repair enzyme for proteins that have been inactivated by oxidation. Catalyzes the reversible oxidation-reduction of methionine sulfoxide in proteins to methionine. This Synechocystis sp. (strain ATCC 27184 / PCC 6803 / Kazusa) protein is Peptide methionine sulfoxide reductase MsrA 2 (msrA2).